The chain runs to 234 residues: Large ribosomal subunit protein uL1 (234 aa).

This sequence belongs to the universal ribosomal protein uL1 family. In terms of assembly, part of the 50S ribosomal subunit.

In terms of biological role, binds directly to 23S rRNA. The L1 stalk is quite mobile in the ribosome, and is involved in E site tRNA release. Protein L1 is also a translational repressor protein, it controls the translation of the L11 operon by binding to its mRNA. The chain is Large ribosomal subunit protein uL1 from Serratia marcescens.